The following is a 630-amino-acid chain: Betaine/ectoine transporter LcoP (630 aa).

A compositionally biased stretch (polar residues) spans Met-1–Gln-13. The tract at residues Met-1–Gly-28 is disordered. The span at Glu-17 to His-26 shows a compositional bias: basic and acidic residues. 12 consecutive transmembrane segments (helical) span residues Thr-47 to Pro-67, Thr-85 to Phe-105, Phe-125 to Pro-145, Phe-177 to Ser-197, Met-230 to Val-250, Ile-267 to Val-287, Ile-299 to Leu-319, Trp-354 to Ala-374, Phe-385 to Gly-405, Leu-436 to Thr-456, Leu-479 to Gly-499, and Leu-510 to Ile-530. The interval Trp-611–Asp-630 is disordered.

The protein belongs to the BCCT transporter (TC 2.A.15) family.

It is found in the cell membrane. With respect to regulation, uptake is activated by hyperosmotic stress. Shows a small but significant chill stimulation around 15 degrees Celsius. Involved in the uptake of osmoprotectants. Can transport betaine and ectoine. Na(+) is probably the coupling ion. This Corynebacterium glutamicum (strain ATCC 13032 / DSM 20300 / JCM 1318 / BCRC 11384 / CCUG 27702 / LMG 3730 / NBRC 12168 / NCIMB 10025 / NRRL B-2784 / 534) protein is Betaine/ectoine transporter LcoP.